A 274-amino-acid chain; its full sequence is Diaminopimelate epimerase (274 aa).

The substrate site is built by N11, Q44, and N64. Residue C73 is the Proton donor of the active site. Residues G74–N75, N157, N190, and E208–R209 contribute to the substrate site. The active-site Proton acceptor is the C217. A substrate-binding site is contributed by G218–S219.

This sequence belongs to the diaminopimelate epimerase family. Homodimer (Potential). Previously DapF has been proposed to be a monomer, however it seems that it adopts a dimeric structure.

The protein resides in the cytoplasm. The enzyme catalyses (2S,6S)-2,6-diaminopimelate = meso-2,6-diaminopimelate. It participates in amino-acid biosynthesis; L-lysine biosynthesis via DAP pathway; DL-2,6-diaminopimelate from LL-2,6-diaminopimelate: step 1/1. With respect to regulation, inhibited by LL-aziridino (LL-AziDAP), DL-aziridino (DL-AziDAP). Also inhibited by (2S,3R,6S)-2,6-diamino-3-fluoropimelate (L,L-3-fluoro-DAP) and (2R,3S,6S)-2,6-diamino-3-fluoropimelate (D,L-3-fluoro-DAP). Its function is as follows. Catalyzes the stereoinversion of LL-2,6-diaminopimelate (L,L-DAP) to meso-diaminopimelate (meso-DAP), a precursor of L-lysine and an essential component of the bacterial peptidoglycan. Only accepts DAP isomers with the L configuration. In Haemophilus influenzae (strain ATCC 51907 / DSM 11121 / KW20 / Rd), this protein is Diaminopimelate epimerase.